A 1155-amino-acid chain; its full sequence is DNA-directed RNA polymerase subunit beta (1155 aa).

Belongs to the RNA polymerase beta chain family. The RNAP catalytic core consists of 2 alpha, 1 beta, 1 beta' and 1 omega subunit. When a sigma factor is associated with the core the holoenzyme is formed, which can initiate transcription.

It carries out the reaction RNA(n) + a ribonucleoside 5'-triphosphate = RNA(n+1) + diphosphate. Functionally, DNA-dependent RNA polymerase catalyzes the transcription of DNA into RNA using the four ribonucleoside triphosphates as substrates. The protein is DNA-directed RNA polymerase subunit beta of Borrelia garinii subsp. bavariensis (strain ATCC BAA-2496 / DSM 23469 / PBi) (Borreliella bavariensis).